The primary structure comprises 275 residues: uncharacterized protein (275 aa).

Belongs to the MtfA family.

This is an uncharacterized protein from Synechocystis sp. (strain ATCC 27184 / PCC 6803 / Kazusa).